We begin with the raw amino-acid sequence, 338 residues long: Glyceraldehyde-3-phosphate dehydrogenase (338 aa).

NAD(+)-binding positions include arginine 13–isoleucine 14, aspartate 35, and arginine 80. Residues serine 151–threonine 153, threonine 182, threonine 211–glycine 212, and arginine 234 each bind D-glyceraldehyde 3-phosphate. Cysteine 152 (nucleophile) is an active-site residue. NAD(+) is bound at residue asparagine 317.

This sequence belongs to the glyceraldehyde-3-phosphate dehydrogenase family. As to quaternary structure, homotetramer.

The protein localises to the cytoplasm. The catalysed reaction is D-glyceraldehyde 3-phosphate + phosphate + NAD(+) = (2R)-3-phospho-glyceroyl phosphate + NADH + H(+). It participates in carbohydrate degradation; glycolysis; pyruvate from D-glyceraldehyde 3-phosphate: step 1/5. This chain is Glyceraldehyde-3-phosphate dehydrogenase (gpdA), found in Aspergillus oryzae (strain ATCC 42149 / RIB 40) (Yellow koji mold).